The chain runs to 1083 residues: FACT complex subunit spt16 (1083 aa).

S437 carries the post-translational modification Phosphoserine. Positions 466-504 form a coiled coil; the sequence is LESKLRNEINTEEKRKEHQRELAQQLNERAKDRLARQGN. Residues 923–1083 form a disordered region; the sequence is FEQGGWTFLD…NGHKSKKSRH (161 aa). Over residues 935–987 the composition is skewed to acidic residues; that stretch reads SGSEGENETAESEEDEAYNPTDAESDEESDEDSEYSEASEDSEESDEDLGSDE. Positions 988–1023 are enriched in basic and acidic residues; that stretch reads ESGKDWSDLEREAAEEDRNHDYAADDKPRNGKFDSK. Residues 1024–1033 are compositionally biased toward basic residues; that stretch reads KHGKSSKHSP. Residues 1058 to 1076 show a composition bias toward basic and acidic residues; the sequence is SSKDKDRKRSRDDSRDNGH.

The protein belongs to the peptidase M24 family. SPT16 subfamily. Component of the FACT complex, a stable heterodimer of dre4/spt16 and Ssrp. Interacts with TRL/GAGA.

The protein resides in the nucleus. It localises to the chromosome. In terms of biological role, component of the FACT complex, a general chromatin factor that acts to reorganize nucleosomes. The FACT complex is involved in multiple processes that require DNA as a template such as mRNA elongation, DNA replication and DNA repair. During transcription elongation the FACT complex acts as a histone chaperone that both destabilizes and restores nucleosomal structure. It facilitates the passage of RNA polymerase II and transcription by promoting the dissociation of one histone H2A-H2B dimer from the nucleosome, then subsequently promotes the reestablishment of the nucleosome following the passage of RNA polymerase II. The FACT complex is required for expression of Hox genes. In Drosophila melanogaster (Fruit fly), this protein is FACT complex subunit spt16 (dre4).